The following is a 204-amino-acid chain: uncharacterized protein (204 aa).

Disordered stretches follow at residues 1–37 (MRAL…GSVS) and 159–204 (GYRP…DGEL). The span at 28-37 (GRGPRAGSVS) shows a compositional bias: low complexity. In terms of domain architecture, WGR spans 88–175 (PYRLYVERLD…LPKEKWPAEA (88 aa)). 2 stretches are compositionally biased toward basic and acidic residues: residues 166-179 (LPKE…EHES) and 188-204 (PEGH…DGEL).

This is an uncharacterized protein from Sinorhizobium fredii (strain NBRC 101917 / NGR234).